Consider the following 20-residue polypeptide: Agglutinin beta-3 chain (20 aa).

Positions 1-20 (GPNGKSQSIIVGPWGDRVTN) are disordered.

The protein belongs to the jacalin lectin family. In terms of assembly, formed of four alpha chains and four beta chains.

In terms of biological role, D-galactose-specific lectin, binds the T-antigen structure Gal-beta1,3-GalNAc. The protein is Agglutinin beta-3 chain of Maclura pomifera (Osage orange).